Here is a 385-residue protein sequence, read N- to C-terminus: Glycine/sarcosine/betaine reductase complex component C subunit alpha (385 aa).

Cysteine 359 is a catalytic residue.

Heterooctamer of four alpha and four beta subunits. Component of the glycine, sarcosine and betaine reductase complexes, together with proteins A and B.

The enzyme catalyses acetyl phosphate + [thioredoxin]-disulfide + NH4(+) + H2O = [thioredoxin]-dithiol + glycine + phosphate + H(+). The catalysed reaction is acetyl phosphate + methylamine + [thioredoxin]-disulfide + H2O = sarcosine + [thioredoxin]-dithiol + phosphate + H(+). It catalyses the reaction acetyl phosphate + trimethylamine + [thioredoxin]-disulfide + H2O = glycine betaine + [thioredoxin]-dithiol + phosphate + H(+). In the first step of glycine, betaine and sarcosine reductases, the substrate is bound to component PB via a Schiff base intermediate. Then the PB-activated substrate is nucleophilically attacked by the selenol anion of component PA to transform it to a carboxymethylated selenoether and the respective amine. By action of component PC, acetyl phosphate is formed, leaving component PA in its oxidized state. Finally component PA becomes reduced by the thioredoxin system to start a new catalytic cycle of reductive deamination. In Peptoclostridium acidaminophilum (Eubacterium acidaminophilum), this protein is Glycine/sarcosine/betaine reductase complex component C subunit alpha (grdD).